Here is a 153-residue protein sequence, read N- to C-terminus: MDHNQYLLTMFFADDDSFFKYLASQDDESSLSDILQITQYLDFLLLLLIQSKNKLEAVGHCYESLSEEYRQLTKFTDFQDFKKLFNKVPIVTDGRVKLNKGYLFDFVISLMRFKKESSLATTAIDPVRYIDPRRNIAFSNVMDILKSNKVNNN.

It belongs to the orthopoxvirus OPG100 family. In terms of assembly, homodimer. Part of a complex composed of the kinase OPG054, OPG092, OPG114, OPG115, OPG142 and OPG157. Interacts with OPG175.

The protein resides in the virion. It is found in the host cytoplasm. Its function is as follows. Late protein which is a part of a large complex required for early virion morphogenesis. This complex participates in the formation of virosomes and the incorporation of virosomal contents into nascent immature virions. Plays a role in DNA packaging during immature virions (IV) formation. This is Virion assembly protein OPG100 (OPG100) from Vaccinia virus (strain Western Reserve) (VACV).